The primary structure comprises 143 residues: MSDLENIDYYDYKALLKRARSQIPDYVFQKDRFELPEIEILIEGNRTIIRNFRELAKAVNRDEEFFAKYLLKETGSAGNLEGGRLILQRRISPELLKSRINDFLREYVICRECGKPDTKIIKEGRVHLLKCMACGAIRPIRMI.

The protein belongs to the eIF-2-beta/eIF-5 family. In terms of assembly, heterotrimer composed of an alpha, a beta and a gamma chain.

In terms of biological role, eIF-2 functions in the early steps of protein synthesis by forming a ternary complex with GTP and initiator tRNA. This is Translation initiation factor 2 subunit beta (eif2b) from Methanocaldococcus jannaschii (strain ATCC 43067 / DSM 2661 / JAL-1 / JCM 10045 / NBRC 100440) (Methanococcus jannaschii).